A 689-amino-acid polypeptide reads, in one-letter code: Glycine--tRNA ligase beta subunit (689 aa).

It belongs to the class-II aminoacyl-tRNA synthetase family. As to quaternary structure, tetramer of two alpha and two beta subunits.

It is found in the cytoplasm. It carries out the reaction tRNA(Gly) + glycine + ATP = glycyl-tRNA(Gly) + AMP + diphosphate. In Shigella dysenteriae serotype 1 (strain Sd197), this protein is Glycine--tRNA ligase beta subunit.